We begin with the raw amino-acid sequence, 209 residues long: Ribonuclease HII (209 aa).

Residues 20–209 (DSEIGIDEVG…KSFLNKLNLI (190 aa)) form the RNase H type-2 domain. Positions 26, 27, and 122 each coordinate a divalent metal cation.

Belongs to the RNase HII family. The cofactor is Mn(2+). Mg(2+) serves as cofactor.

It is found in the cytoplasm. It catalyses the reaction Endonucleolytic cleavage to 5'-phosphomonoester.. Functionally, endonuclease that specifically degrades the RNA of RNA-DNA hybrids. In Prochlorococcus marinus subsp. pastoris (strain CCMP1986 / NIES-2087 / MED4), this protein is Ribonuclease HII.